The following is a 101-amino-acid chain: Ribonuclease P protein component 1 (101 aa).

This sequence belongs to the eukaryotic/archaeal RNase P protein component 1 family. In terms of assembly, consists of a catalytic RNA component and at least 4-5 protein subunits.

It localises to the cytoplasm. The catalysed reaction is Endonucleolytic cleavage of RNA, removing 5'-extranucleotides from tRNA precursor.. Part of ribonuclease P, a protein complex that generates mature tRNA molecules by cleaving their 5'-ends. The polypeptide is Ribonuclease P protein component 1 (Methanococcoides burtonii (strain DSM 6242 / NBRC 107633 / OCM 468 / ACE-M)).